A 116-amino-acid chain; its full sequence is uncharacterized protein (116 aa).

A helical membrane pass occupies residues 22–42 (LIFLVVNLKVPAVGLELFLLV).

It localises to the membrane. This is an uncharacterized protein from Saccharomyces cerevisiae (strain ATCC 204508 / S288c) (Baker's yeast).